The primary structure comprises 274 residues: Large ribosomal subunit protein uL2cz/uL2cy (274 aa).

Disordered stretches follow at residues 1 to 22 (MAIHLYKTSTPSTRNGAVDSQV) and 225 to 252 (PVDHPHGGGEGRAPIGRKKPVTPWGYPA).

The protein belongs to the universal ribosomal protein uL2 family. In terms of assembly, part of the 50S ribosomal subunit.

The protein resides in the plastid. It is found in the chloroplast. The polypeptide is Large ribosomal subunit protein uL2cz/uL2cy (rpl2-A) (Barbarea verna (Land cress)).